The chain runs to 401 residues: Argininosuccinate synthase (401 aa).

8–16 is a binding site for ATP; that stretch reads AYSGGLDTS. Tyr85 lines the L-citrulline pocket. Position 115 (Gly115) interacts with ATP. Residues Thr117, Asn121, and Asp122 each coordinate L-aspartate. Asn121 is an L-citrulline binding site. Residues Arg125, Ser173, Glu258, and Tyr270 each contribute to the L-citrulline site.

Belongs to the argininosuccinate synthase family. Type 1 subfamily. In terms of assembly, homotetramer.

Its subcellular location is the cytoplasm. It carries out the reaction L-citrulline + L-aspartate + ATP = 2-(N(omega)-L-arginino)succinate + AMP + diphosphate + H(+). It functions in the pathway amino-acid biosynthesis; L-arginine biosynthesis; L-arginine from L-ornithine and carbamoyl phosphate: step 2/3. The chain is Argininosuccinate synthase from Staphylococcus aureus (strain bovine RF122 / ET3-1).